The following is a 79-amino-acid chain: Acyl carrier protein (79 aa).

Residues 2-77 (SDIADKVKKI…DAIDYIEKQK (76 aa)) enclose the Carrier domain. Ser-37 carries the O-(pantetheine 4'-phosphoryl)serine modification.

Belongs to the acyl carrier protein (ACP) family. 4'-phosphopantetheine is transferred from CoA to a specific serine of apo-ACP by AcpS. This modification is essential for activity because fatty acids are bound in thioester linkage to the sulfhydryl of the prosthetic group.

The protein localises to the cytoplasm. It participates in lipid metabolism; fatty acid biosynthesis. Carrier of the growing fatty acid chain in fatty acid biosynthesis. The sequence is that of Acyl carrier protein from Gluconobacter oxydans (strain 621H) (Gluconobacter suboxydans).